The primary structure comprises 188 residues: uncharacterized protein (188 aa).

The next 3 helical transmembrane spans lie at 6-26 (MIVF…SLPL), 43-63 (FAGR…ILFA), and 110-130 (ALFL…MIAA).

It localises to the membrane. This is an uncharacterized protein from Schizosaccharomyces pombe (strain 972 / ATCC 24843) (Fission yeast).